Reading from the N-terminus, the 678-residue chain is Macrolide export ATP-binding/permease protein MacB 1 (678 aa).

The 239-residue stretch at 11–249 (LRLENVSREF…PKMVDIPSVI (239 aa)) folds into the ABC transporter domain. 47 to 54 (GTSGSGKS) is an ATP binding site. 4 consecutive transmembrane segments (helical) span residues 303 to 323 (ALTMLGIIIGIASVVSVVALG), 558 to 578 (IAVISLIVGGIGVMNIMLVSV), 608 to 628 (LVCLLGGSLGVALSLGIGLLF), and 641 to 661 (AASIITAFVCSSLIGVIFGFF).

The protein belongs to the ABC transporter superfamily. Macrolide exporter (TC 3.A.1.122) family. In terms of assembly, homodimer. Part of the tripartite efflux system MacAB-TolC, which is composed of an inner membrane transporter, MacB, a periplasmic membrane fusion protein, MacA, and an outer membrane component, TolC. The complex forms a large protein conduit and can translocate molecules across both the inner and outer membranes. Interacts with MacA.

Its subcellular location is the cell inner membrane. In terms of biological role, part of the tripartite efflux system MacAB-TolC. MacB is a non-canonical ABC transporter that contains transmembrane domains (TMD), which form a pore in the inner membrane, and an ATP-binding domain (NBD), which is responsible for energy generation. Confers resistance against macrolides. This chain is Macrolide export ATP-binding/permease protein MacB 1, found in Yersinia pestis bv. Antiqua (strain Nepal516).